We begin with the raw amino-acid sequence, 146 residues long: Bifunctional adenosine 5'-phosphosulfate phosphorylase/adenylylsulfatase HINT4 (146 aa).

One can recognise an HIT domain in the interval 9 to 120 (IFCEIVRNPT…YVPRWKAIKY (112 aa)). The Histidine triad motif motif lies at 101-105 (HLHLH). The active-site Tele-AMP-histidine intermediate is H105.

As to quaternary structure, homodimer.

Its subcellular location is the peroxisome. The catalysed reaction is sulfate + ADP + H(+) = adenosine 5'-phosphosulfate + phosphate. It carries out the reaction adenosine 5'-phosphosulfate + H2O = sulfate + AMP + 2 H(+). With respect to regulation, the adenosine 5'-phosphosulfate phosphorylase activity is enhanced at low pH. Possesses adenylylsulfatase activity in vitro, releasing AMP and sulfate from adenylyl sulfate. Also possesses adenosine 5'-phosphosulfate (APS) phosphorylase activity in vitro. Catalyzes the phosphorolysis of APS, leading to ADP and sulfate. The sequence is that of Bifunctional adenosine 5'-phosphosulfate phosphorylase/adenylylsulfatase HINT4 from Arabidopsis thaliana (Mouse-ear cress).